Here is a 609-residue protein sequence, read N- to C-terminus: Glutamine--fructose-6-phosphate aminotransferase [isomerizing] (609 aa).

Catalysis depends on Cys-2, which acts as the Nucleophile; for GATase activity. Residues 2-218 (CGIVGAIAQR…EGDIAEITRR (217 aa)) enclose the Glutamine amidotransferase type-2 domain. 2 SIS domains span residues 286-426 (ADDL…LKGL) and 458-599 (LAED…VDQP). Lys-604 functions as the For Fru-6P isomerization activity in the catalytic mechanism.

As to quaternary structure, homodimer.

It is found in the cytoplasm. It catalyses the reaction D-fructose 6-phosphate + L-glutamine = D-glucosamine 6-phosphate + L-glutamate. In terms of biological role, catalyzes the first step in hexosamine metabolism, converting fructose-6P into glucosamine-6P using glutamine as a nitrogen source. This is Glutamine--fructose-6-phosphate aminotransferase [isomerizing] from Salmonella typhi.